Reading from the N-terminus, the 296-residue chain is D-alanine--D-alanine ligase (296 aa).

Positions 99-292 (TYRVLDGYVN…FEELVDAIIQ (194 aa)) constitute an ATP-grasp domain. 125–176 (GFPCVIKPRKEGSSIGVHICDNSNQLYNDLSEELKKYNEMMIQRYIEGRELT) is an ATP binding site. Mg(2+) contacts are provided by aspartate 247, glutamate 259, and asparagine 261.

It belongs to the D-alanine--D-alanine ligase family. Mg(2+) is required as a cofactor. Mn(2+) serves as cofactor.

Its subcellular location is the cytoplasm. It catalyses the reaction 2 D-alanine + ATP = D-alanyl-D-alanine + ADP + phosphate + H(+). The protein operates within cell wall biogenesis; peptidoglycan biosynthesis. Functionally, cell wall formation. The chain is D-alanine--D-alanine ligase from Pseudothermotoga lettingae (strain ATCC BAA-301 / DSM 14385 / NBRC 107922 / TMO) (Thermotoga lettingae).